Reading from the N-terminus, the 1026-residue chain is RecBCD enzyme subunit RecB (1026 aa).

A UvrD-like helicase ATP-binding domain is found at 1–438; sequence MSSFDIFSPT…LILDTNYRST (438 aa). The tract at residues 1–766 is DNA-binding and helicase activity, interacts with RecC; that stretch reads MSSFDIFSPT…LANYANVTKH (766 aa). Position 21 to 28 (21 to 28) interacts with ATP; the sequence is ASAGTGKT. The segment at 815 to 1026 is nuclease activity, interacts with RecD and RecA; sequence SRTIHSFSST…KGNGFLQPGR (212 aa). Mg(2+) is bound by residues His-854, Asp-940, and Asp-953. Catalysis depends on Asp-953, which acts as the For nuclease activity.

The protein belongs to the helicase family. UvrD subfamily. Heterotrimer of RecB, RecC and RecD. All subunits contribute to DNA-binding. Interacts with RecA. Mg(2+) is required as a cofactor.

It catalyses the reaction Exonucleolytic cleavage (in the presence of ATP) in either 5'- to 3'- or 3'- to 5'-direction to yield 5'-phosphooligonucleotides.. The enzyme catalyses Couples ATP hydrolysis with the unwinding of duplex DNA by translocating in the 3'-5' direction.. The catalysed reaction is ATP + H2O = ADP + phosphate + H(+). Functionally, a helicase/nuclease that prepares dsDNA breaks (DSB) for recombinational DNA repair. Binds to DSBs and unwinds DNA via a highly rapid and processive ATP-dependent bidirectional helicase activity. Unwinds dsDNA until it encounters a Chi (crossover hotspot instigator) sequence from the 3' direction. Cuts ssDNA a few nucleotides 3' to the Chi site. The properties and activities of the enzyme are changed at Chi. The Chi-altered holoenzyme produces a long 3'-ssDNA overhang and facilitates RecA-binding to the ssDNA for homologous DNA recombination and repair. Holoenzyme degrades any linearized DNA that is unable to undergo homologous recombination. In the holoenzyme this subunit contributes ATPase, 3'-5' helicase, exonuclease activity and loads RecA onto ssDNA. This Chlamydia trachomatis serovar D (strain ATCC VR-885 / DSM 19411 / UW-3/Cx) protein is RecBCD enzyme subunit RecB.